The following is a 348-amino-acid chain: Tetraacyldisaccharide 4'-kinase (348 aa).

65–72 (VAGGAGKT) is a binding site for ATP. Positions 89 to 117 (PGIVSRGHGSREREARPVSADSTAQSVGD) are disordered.

It belongs to the LpxK family.

It carries out the reaction a lipid A disaccharide + ATP = a lipid IVA + ADP + H(+). Its pathway is glycolipid biosynthesis; lipid IV(A) biosynthesis; lipid IV(A) from (3R)-3-hydroxytetradecanoyl-[acyl-carrier-protein] and UDP-N-acetyl-alpha-D-glucosamine: step 6/6. Transfers the gamma-phosphate of ATP to the 4'-position of a tetraacyldisaccharide 1-phosphate intermediate (termed DS-1-P) to form tetraacyldisaccharide 1,4'-bis-phosphate (lipid IVA). The sequence is that of Tetraacyldisaccharide 4'-kinase from Leptothrix cholodnii (strain ATCC 51168 / LMG 8142 / SP-6) (Leptothrix discophora (strain SP-6)).